We begin with the raw amino-acid sequence, 535 residues long: Arginine-containing cyclodipeptide synthase anoA (535 aa).

The segment at 93-114 is disordered; it reads LLSPPREPGPIDSETKTREKKS. Residues 105 to 114 are compositionally biased toward basic and acidic residues; the sequence is SETKTREKKS. The Conserved DDXXE motif motif lies at 424-428; sequence DDIAE.

The protein belongs to the arginine-containing cyclodipeptide synthase family.

It catalyses the reaction L-tryptophyl-tRNA(Trp) + L-arginyl-tRNA(Arg) = cyclo(L-arginyl-L-tryptophyl) + tRNA(Trp) + tRNA(Arg) + H(+). It participates in secondary metabolite biosynthesis. Arginine-containing cyclodipeptide synthase; part of the cluster that mediates the biosynthesis of a highly modified cyclo-arginine-tryptophan dipeptide (cRW). Within the pathway, AnoA acts as the scaffold-generating enzyme and is responsible for formation of the cyclo-Arg-Trp diketopiperazine (cRW) from L-arginyl-tRNA(Arg) + L-tryptophanyl-tRNA(Trp). Additional enzymes from the cluster then further modify the cyclo-Arg-Asp diketopiperazine (cRW) scaffold. The sequence is that of Arginine-containing cyclodipeptide synthase anoA from Aspergillus nomiae (Aspergillus nomius).